Reading from the N-terminus, the 763-residue chain is MGTVPDPLRVTKASIVAASGKEESRGESQSVSPQPAQPDNNASGIGNVPAELSLQLSAAAQALMQACVSESSQQDMASPGVFSEGEPVSPKQKTPDDFLLHGSKESAAPGLNATAQKELISAPCLISVVQHTHHAIQRDAPNTSTCAVPEGSLVKSEANSNGENPEKPGCPARVTCCSSKNQEGLCDFPSPENSQGILQTPDIASPSADRPEGEGQKVINNITAVSSEPPVREGCSENKQPSATALNTTAERSENPPPSHLTSKGATCSSEARQALLPAQYPVSRFKEASTMTCQAESGAKEVSGRAWQDAEVQAVASVESRSVSTSPSILPAYLKENPAPELENGQEQLRVICHGKGSGNHLLELSNSMVDSQESRQCPSIVPQVHIQAATATPAAFKGGCKPANQPAEGLKSPLIHVTSSQNTETEEDLRLSASKEATSRQPEGTNPDFQKANAIGQISLPAGSQAEINQGLWNSGPREPEIVVKTAKDHKAESSCKPSNSGGGANKDYPPESLDPTDKKGAKDKKPASPLIVKDHAPGATSTLDAKTLLLNPKSQVKEGEGPEVSPAPSPGRKSQQNTLEELRQPKTVMSLSLPSDGTGDSSPGSGKRTPSLSVKASPRRGSRVSEFLKELSVTAAAAQVGLTPGEKKKQLGADSKLHLKQSKRVRDVVWDDQGMTWEVYGASLDPESLGVAIQNHLQRQIREHEKIVKTQSGQTRRSISSDSSSSKKLKGRQHGVLQSMLQNFRRPNCCVRPAPSSVLD.

3 disordered regions span residues 1 to 48 (MGTV…IGNV), 65 to 111 (QACV…APGL), and 192 to 268 (ENSQ…GATC). A compositionally biased stretch (polar residues) spans 27–44 (ESQSVSPQPAQPDNNASG). Over residues 93–104 (KTPDDFLLHGSK) the composition is skewed to basic and acidic residues. A compositionally biased stretch (polar residues) spans 237-250 (ENKQPSATALNTTA). Serine 323 and serine 359 each carry phosphoserine. Disordered regions lie at residues 420 to 452 (TSSQ…PDFQ), 471 to 624 (NQGL…PRRG), and 711 to 737 (VKTQ…GRQH). Residues 437 to 450 (KEATSRQPEGTNPD) show a composition bias toward polar residues. Composition is skewed to basic and acidic residues over residues 480–496 (REPE…KAES) and 518–539 (PTDK…KDHA). The segment covering 593 to 609 (SLSLPSDGTGDSSPGSG) has biased composition (low complexity).

In terms of biological role, may be involved in neurite outgrowth. This Mus musculus (Mouse) protein is G protein-regulated inducer of neurite outgrowth 3 (Gprin3).